We begin with the raw amino-acid sequence, 296 residues long: Polyamine aminopropyltransferase (296 aa).

In terms of domain architecture, PABS spans E5–Q238. An S-methyl-5'-thioadenosine-binding site is contributed by Q33. The spermidine site is built by H64 and D88. Residues E108 and D140 to G141 each bind S-methyl-5'-thioadenosine. D158 acts as the Proton acceptor in catalysis. D158–D161 serves as a coordination point for spermidine. P165 contributes to the S-methyl-5'-thioadenosine binding site.

The protein belongs to the spermidine/spermine synthase family. Homodimer or homotetramer.

Its subcellular location is the cytoplasm. The enzyme catalyses S-adenosyl 3-(methylsulfanyl)propylamine + putrescine = S-methyl-5'-thioadenosine + spermidine + H(+). Its pathway is amine and polyamine biosynthesis; spermidine biosynthesis; spermidine from putrescine: step 1/1. Functionally, catalyzes the irreversible transfer of a propylamine group from the amino donor S-adenosylmethioninamine (decarboxy-AdoMet) to putrescine (1,4-diaminobutane) to yield spermidine. This chain is Polyamine aminopropyltransferase, found in Yersinia pestis bv. Antiqua (strain Antiqua).